The chain runs to 218 residues: PKHD-type hydroxylase Sala_1910 (218 aa).

Positions 74-172 (RIAPPLLTRY…RLVAITFIQS (99 aa)) constitute a Fe2OG dioxygenase domain. Fe cation-binding residues include His-92, Asp-94, and His-153. 2-oxoglutarate is bound at residue Arg-163.

It depends on Fe(2+) as a cofactor. The cofactor is L-ascorbate.

The protein is PKHD-type hydroxylase Sala_1910 of Sphingopyxis alaskensis (strain DSM 13593 / LMG 18877 / RB2256) (Sphingomonas alaskensis).